Reading from the N-terminus, the 745-residue chain is uncharacterized protein (745 aa).

In terms of domain architecture, HTH araC/xylS-type spans 158 to 256; it reads NQVCDYIELH…HQTPKQYRGD (99 aa). DNA-binding regions (H-T-H motif) lie at residues 175 to 196 and 223 to 246; these read SELS…TESL and ITDI…KHFT.

This is an uncharacterized protein from Staphylococcus aureus (strain COL).